Reading from the N-terminus, the 330-residue chain is Ketol-acid reductoisomerase (NADP(+)) (330 aa).

A KARI N-terminal Rossmann domain is found at 1 to 181 (MKVFYDSDFK…GLSRAGVIQT (181 aa)). NADP(+) contacts are provided by residues 24–27 (YGSQ), R47, S52, and 82–85 (DELQ). H107 is a catalytic residue. G133 contributes to the NADP(+) binding site. One can recognise a KARI C-terminal knotted domain in the interval 182–327 (TFKEETETDL…AKLRKMCGLE (146 aa)). The Mg(2+) site is built by D190, E194, E226, and E230. S251 lines the substrate pocket.

Belongs to the ketol-acid reductoisomerase family. It depends on Mg(2+) as a cofactor.

It carries out the reaction (2R)-2,3-dihydroxy-3-methylbutanoate + NADP(+) = (2S)-2-acetolactate + NADPH + H(+). It catalyses the reaction (2R,3R)-2,3-dihydroxy-3-methylpentanoate + NADP(+) = (S)-2-ethyl-2-hydroxy-3-oxobutanoate + NADPH + H(+). It participates in amino-acid biosynthesis; L-isoleucine biosynthesis; L-isoleucine from 2-oxobutanoate: step 2/4. Its pathway is amino-acid biosynthesis; L-valine biosynthesis; L-valine from pyruvate: step 2/4. Functionally, involved in the biosynthesis of branched-chain amino acids (BCAA). Catalyzes an alkyl-migration followed by a ketol-acid reduction of (S)-2-acetolactate (S2AL) to yield (R)-2,3-dihydroxy-isovalerate. In the isomerase reaction, S2AL is rearranged via a Mg-dependent methyl migration to produce 3-hydroxy-3-methyl-2-ketobutyrate (HMKB). In the reductase reaction, this 2-ketoacid undergoes a metal-dependent reduction by NADPH to yield (R)-2,3-dihydroxy-isovalerate. This Methanococcus maripaludis (strain DSM 14266 / JCM 13030 / NBRC 101832 / S2 / LL) protein is Ketol-acid reductoisomerase (NADP(+)).